Reading from the N-terminus, the 478-residue chain is DNA gyrase subunit B (478 aa).

In terms of domain architecture, Toprim spans 319–438 (CEIYLVEGDS…GGHVYIAQPP (120 aa)). 3 residues coordinate Mg(2+): Glu325, Asp403, and Asp405.

The protein belongs to the type II topoisomerase GyrB family. In terms of assembly, heterotetramer, composed of two GyrA and two GyrB chains. In the heterotetramer, GyrA contains the active site tyrosine that forms a transient covalent intermediate with DNA, while GyrB binds cofactors and catalyzes ATP hydrolysis. It depends on Mg(2+) as a cofactor. Mn(2+) serves as cofactor. Ca(2+) is required as a cofactor.

It is found in the cytoplasm. It catalyses the reaction ATP-dependent breakage, passage and rejoining of double-stranded DNA.. In terms of biological role, a type II topoisomerase that negatively supercoils closed circular double-stranded (ds) DNA in an ATP-dependent manner to modulate DNA topology and maintain chromosomes in an underwound state. Negative supercoiling favors strand separation, and DNA replication, transcription, recombination and repair, all of which involve strand separation. Also able to catalyze the interconversion of other topological isomers of dsDNA rings, including catenanes and knotted rings. Type II topoisomerases break and join 2 DNA strands simultaneously in an ATP-dependent manner. In Cytophaga aurantiaca, this protein is DNA gyrase subunit B (gyrB).